The sequence spans 320 residues: Delta-aminolevulinic acid dehydratase (320 aa).

The Zn(2+) site is built by C119, C121, and C129. K194 (schiff-base intermediate with substrate) is an active-site residue. 5-aminolevulinate contacts are provided by R204 and R216. E232 is a binding site for Mg(2+). The Schiff-base intermediate with substrate role is filled by K247. S273 contacts 5-aminolevulinate.

The protein belongs to the ALAD family. In terms of assembly, homooctamer. Requires Zn(2+) as cofactor.

The enzyme catalyses 2 5-aminolevulinate = porphobilinogen + 2 H2O + H(+). Its pathway is porphyrin-containing compound metabolism; protoporphyrin-IX biosynthesis; coproporphyrinogen-III from 5-aminolevulinate: step 1/4. Its function is as follows. Catalyzes an early step in the biosynthesis of tetrapyrroles. Binds two molecules of 5-aminolevulinate per subunit, each at a distinct site, and catalyzes their condensation to form porphobilinogen. The sequence is that of Delta-aminolevulinic acid dehydratase (hemB) from Methanothermus sociabilis.